Reading from the N-terminus, the 379-residue chain is Cobalt-precorrin-5B C(1)-methyltransferase (379 aa).

The protein belongs to the CbiD family.

It catalyses the reaction Co-precorrin-5B + S-adenosyl-L-methionine = Co-precorrin-6A + S-adenosyl-L-homocysteine. The protein operates within cofactor biosynthesis; adenosylcobalamin biosynthesis; cob(II)yrinate a,c-diamide from sirohydrochlorin (anaerobic route): step 6/10. Its function is as follows. Catalyzes the methylation of C-1 in cobalt-precorrin-5B to form cobalt-precorrin-6A. This Salmonella schwarzengrund (strain CVM19633) protein is Cobalt-precorrin-5B C(1)-methyltransferase.